Reading from the N-terminus, the 326-residue chain is 4-hydroxy-3-methylbut-2-enyl diphosphate reductase (326 aa).

[4Fe-4S] cluster is bound at residue C22. (2E)-4-hydroxy-3-methylbut-2-enyl diphosphate-binding residues include H51 and H84. Residues H51 and H84 each coordinate dimethylallyl diphosphate. The isopentenyl diphosphate site is built by H51 and H84. C106 is a binding site for [4Fe-4S] cluster. Position 134 (H134) interacts with (2E)-4-hydroxy-3-methylbut-2-enyl diphosphate. H134 lines the dimethylallyl diphosphate pocket. H134 serves as a coordination point for isopentenyl diphosphate. E136 (proton donor) is an active-site residue. T174 is a (2E)-4-hydroxy-3-methylbut-2-enyl diphosphate binding site. C204 is a [4Fe-4S] cluster binding site. S232, S233, N234, and S276 together coordinate (2E)-4-hydroxy-3-methylbut-2-enyl diphosphate. 4 residues coordinate dimethylallyl diphosphate: S232, S233, N234, and S276. S232, S233, N234, and S276 together coordinate isopentenyl diphosphate.

The protein belongs to the IspH family. Requires [4Fe-4S] cluster as cofactor.

The catalysed reaction is isopentenyl diphosphate + 2 oxidized [2Fe-2S]-[ferredoxin] + H2O = (2E)-4-hydroxy-3-methylbut-2-enyl diphosphate + 2 reduced [2Fe-2S]-[ferredoxin] + 2 H(+). It carries out the reaction dimethylallyl diphosphate + 2 oxidized [2Fe-2S]-[ferredoxin] + H2O = (2E)-4-hydroxy-3-methylbut-2-enyl diphosphate + 2 reduced [2Fe-2S]-[ferredoxin] + 2 H(+). The protein operates within isoprenoid biosynthesis; dimethylallyl diphosphate biosynthesis; dimethylallyl diphosphate from (2E)-4-hydroxy-3-methylbutenyl diphosphate: step 1/1. It functions in the pathway isoprenoid biosynthesis; isopentenyl diphosphate biosynthesis via DXP pathway; isopentenyl diphosphate from 1-deoxy-D-xylulose 5-phosphate: step 6/6. Its function is as follows. Catalyzes the conversion of 1-hydroxy-2-methyl-2-(E)-butenyl 4-diphosphate (HMBPP) into a mixture of isopentenyl diphosphate (IPP) and dimethylallyl diphosphate (DMAPP). Acts in the terminal step of the DOXP/MEP pathway for isoprenoid precursor biosynthesis. The polypeptide is 4-hydroxy-3-methylbut-2-enyl diphosphate reductase (Bordetella parapertussis (strain 12822 / ATCC BAA-587 / NCTC 13253)).